A 67-amino-acid chain; its full sequence is DNA-directed RNA polymerase subunit omega (67 aa).

It belongs to the RNA polymerase subunit omega family. The RNAP catalytic core consists of 2 alpha, 1 beta, 1 beta' and 1 omega subunit. When a sigma factor is associated with the core the holoenzyme is formed, which can initiate transcription.

It carries out the reaction RNA(n) + a ribonucleoside 5'-triphosphate = RNA(n+1) + diphosphate. Its function is as follows. Promotes RNA polymerase assembly. Latches the N- and C-terminal regions of the beta' subunit thereby facilitating its interaction with the beta and alpha subunits. This is DNA-directed RNA polymerase subunit omega from Burkholderia ambifaria (strain MC40-6).